Consider the following 291-residue polypeptide: Trimeric intracellular cation channel type B (291 aa).

The Lumenal segment spans residues 1-16 (MEYPWDDLTLAFSRTS). A helical transmembrane segment spans residues 17–33 (MFPFFDIAHYLVSVMAL). Residues 34 to 47 (KQRPGAVAAAWSNP) lie on the Cytoplasmic side of the membrane. A helical membrane pass occupies residues 48–69 (LSSWLSAMLHCFGGGILSCILL). Residues 70 to 80 (AEPPLKFLTNH) are Lumenal-facing. Residues 81-99 (TNILLASSIWYIVFFCPRD) traverse the membrane as a helical segment. Residues 100–103 (LVSQ) lie on the Cytoplasmic side of the membrane. The helical transmembrane segment at 104-122 (GYSYQPIQLLAAGMKEVTR) threads the bilayer. A 1,2-diacyl-sn-glycero-3-phospho-(1D-myo-inositol-4,5-bisphosphate)-binding residues include Lys118 and Arg122. The Lumenal portion of the chain corresponds to 123–138 (TWKIVGGVAHANGYYR). The chain crosses the membrane as a helical span at residues 139–156 (NGWIVMIAVGWARGAGGA). Topologically, residues 157–179 (IITACEQLLKGDWKPEGDEWLKM) are cytoplasmic. A helical membrane pass occupies residues 180-197 (SFPCKVTLLGSIMFTFQH). Topologically, residues 198-206 (TRHLAISKH) are lumenal. The helical transmembrane segment at 207 to 225 (DLMFLYTIFLVTIKVTMMM) threads the bilayer. Topologically, residues 226–291 (TKDAAVTLTP…SAKRHAKKED (66 aa)) are cytoplasmic. The interval 254–291 (LSEKKAEVKPSSNGSASSASKRGTEPPSSAKRHAKKED) is disordered. The segment covering 264–273 (SSNGSASSAS) has biased composition (low complexity).

This sequence belongs to the TMEM38 family. In terms of assembly, homotrimer; conformation seems to be controled by binding to diacylglycerol (DAG).

The protein resides in the endoplasmic reticulum membrane. It catalyses the reaction K(+)(in) = K(+)(out). With respect to regulation, channel activity is activated by increased cytosolic Ca(2+) levels and blocked by luminal high Ca(2+) levels. In terms of biological role, intracellular monovalent cation channel required for maintenance of rapid intracellular calcium release. Acts as a potassium counter-ion channel that functions in synchronization with calcium release from intracellular stores. Activated by increased cytosolic Ca(2+) levels. This chain is Trimeric intracellular cation channel type B (Tmem38b), found in Rattus norvegicus (Rat).